Reading from the N-terminus, the 72-residue chain is Prokaryotic ubiquitin-like protein Pup (72 aa).

Residues 1–11 are compositionally biased toward gly residues; it reads MAQRDTGGGQQ. The disordered stretch occupies residues 1–41; it reads MAQRDTGGGQQRTGRRDDETAEAEVEESGASDLKERHEKLS. Acidic residues predominate over residues 19-29; sequence ETAEAEVEESG. The stretch at 22–61 forms a coiled coil; that stretch reads EAEVEESGASDLKERHEKLSEDVDSLLDEIDDVLEENAEE. Positions 28–66 are ARC ATPase binding; it reads SGASDLKERHEKLSEDVDSLLDEIDDVLEENAEEFVKGY. Residues 32–41 are compositionally biased toward basic and acidic residues; that stretch reads DLKERHEKLS. Glutamine 72 carries the deamidated glutamine modification. Residue glutamine 72 forms an Isoglutamyl lysine isopeptide (Gln-Lys) (interchain with K-? in acceptor proteins) linkage.

The protein belongs to the prokaryotic ubiquitin-like protein family. As to quaternary structure, strongly interacts with the proteasome-associated ATPase ARC through a hydrophobic interface; the interacting region of Pup lies in its C-terminal half. There is one Pup binding site per ARC hexamer ring. In terms of processing, is modified by deamidation of its C-terminal glutamine to glutamate by the deamidase Dop, a prerequisite to the subsequent pupylation process.

Its pathway is protein degradation; proteasomal Pup-dependent pathway. In terms of biological role, protein modifier that is covalently attached to lysine residues of substrate proteins, thereby targeting them for proteasomal degradation. The tagging system is termed pupylation. This chain is Prokaryotic ubiquitin-like protein Pup, found in Parafrankia sp. (strain EAN1pec).